The chain runs to 420 residues: D-tagatose-1,6-bisphosphate aldolase subunit GatZ (420 aa).

This sequence belongs to the GatZ/KbaZ family. GatZ subfamily. In terms of assembly, forms a complex with GatY.

It functions in the pathway carbohydrate metabolism; D-tagatose 6-phosphate degradation; D-glyceraldehyde 3-phosphate and glycerone phosphate from D-tagatose 6-phosphate: step 2/2. Component of the tagatose-1,6-bisphosphate aldolase GatYZ that is required for full activity and stability of the Y subunit. Could have a chaperone-like function for the proper and stable folding of GatY. When expressed alone, GatZ does not show any aldolase activity. Is involved in the catabolism of galactitol. This Escherichia coli O8 (strain IAI1) protein is D-tagatose-1,6-bisphosphate aldolase subunit GatZ.